A 324-amino-acid polypeptide reads, in one-letter code: Glyoxylate/hydroxypyruvate reductase B (324 aa).

Active-site residues include Arg237 and Glu266. Catalysis depends on His285, which acts as the Proton donor.

The protein belongs to the D-isomer specific 2-hydroxyacid dehydrogenase family. GhrB subfamily. As to quaternary structure, homodimer.

The protein resides in the cytoplasm. It catalyses the reaction glycolate + NADP(+) = glyoxylate + NADPH + H(+). The enzyme catalyses (R)-glycerate + NAD(+) = 3-hydroxypyruvate + NADH + H(+). The catalysed reaction is (R)-glycerate + NADP(+) = 3-hydroxypyruvate + NADPH + H(+). Its function is as follows. Catalyzes the NADPH-dependent reduction of glyoxylate and hydroxypyruvate into glycolate and glycerate, respectively. The chain is Glyoxylate/hydroxypyruvate reductase B from Cronobacter sakazakii (strain ATCC BAA-894) (Enterobacter sakazakii).